A 340-amino-acid chain; its full sequence is MGGGVSVELPKRDPPPGVPTDEMLLNVDKMHDVIAPAKLLEYVHIGPLAKDKEDKVKKRYPEFRLVNTGPGGLSALLRQSYNGTAPNCCHTFNRTHYWKKDGKISDKYEEGAVLESCWPDVHDTGKCDVNLFDWCQGDTFDRNICHQWIGSAFNRSDRTVEGQQSLINLYNKMQTLCSKDASVPICESFLHHLRAHNTEDSKEMIDYILRQQSANFKQKYMRCSYPTRDKLEESLKYAEPRECWDPECSNANVNFLLTRNYNNLGLCNIVRCNTSVNNLQMDKTSSLRLSCGLSNSDRFSTVPVNRAKVVQHNIKHSFDLKLHLISLLSLLVIWILIVAI.

Residues 1–20 (MGGGVSVELPKRDPPPGVPT) form a disordered region. A lipid anchor (N-myristoyl glycine; by host) is attached at G2. Residues 2 to 319 (GGGVSVELPK…VQHNIKHSFD (318 aa)) lie on the Virion surface side of the membrane. The chain crosses the membrane as a helical; Signal-anchor for type II membrane protein span at residues 320-340 (LKLHLISLLSLLVIWILIVAI).

It belongs to the orthopoxvirus OPG086 family. In terms of assembly, interacts with OPG143. Component of the entry fusion complex (EFC) composed of OPG053, OPG076, OPG086, OPG094, OPG095, OPG099, OPG107, OPG143, OPG104, OPG147 and OPG155. Except for OPG095 and OPG053, each of the EFC proteins is required for assembly or stability of the complex. Unglycosylated because produced in viral factories instead of the classic ER -Golgi route.

The protein localises to the virion membrane. Functionally, component of the entry fusion complex (EFC), which consists of 11 proteins. During cell infection, this complex mediates entry of the virion core into the host cytoplasm by a two-step mechanism consisting of lipid mixing of the viral and cellular membranes and subsequent pore formation. This is Entry-fusion complex protein OPG094 (OPG094) from Variola virus.